We begin with the raw amino-acid sequence, 439 residues long: Xylose isomerase (439 aa).

Residues His101 and Asp104 contribute to the active site. The Mg(2+) site is built by Glu232, Glu268, His271, Asp296, Asp307, Asp309, and Asp339.

The protein belongs to the xylose isomerase family. Homotetramer. Mg(2+) serves as cofactor.

It localises to the cytoplasm. It catalyses the reaction alpha-D-xylose = alpha-D-xylulofuranose. In Yersinia enterocolitica serotype O:8 / biotype 1B (strain NCTC 13174 / 8081), this protein is Xylose isomerase.